The primary structure comprises 1272 residues: Fused isobutyryl-CoA mutase (1272 aa).

A B12-binding domain is found at 20–158; it reads RLRFVTAAAL…ARCAEGARAA (139 aa). H33 lines the adenosylcob(III)alamin pocket. Positions 163–536 are GTPase chaperone MeaI; that stretch reads ESQVGAWAAE…YRHVAEALRK (374 aa). Positions 193 to 240 are disordered; it reads GAVARNPSSEASRVAAAGRGDHLDRGVRAASTADTADTANTANTANTA. Low complexity predominate over residues 221–240; the sequence is AASTADTADTANTANTANTA. Residue 334–339 participates in GTP binding; that stretch reads GAGKSS. Residues S338, I363, D364, and D377 each coordinate Mg(2+). R380 contacts GTP. Mg(2+)-binding residues include E429 and T430. Residue 476–479 participates in GTP binding; the sequence is NKFD. Residues 537–758 are linker; it reads HGLRSGGGRL…MLDNLPGYFP (222 aa). Low complexity-rich tracts occupy residues 614–631 and 639–663; these read TVATSASPGASASSKANA and ANASPGANTTANSNASATSGTATPT. Residues 614-667 form a disordered region; it reads TVATSASPGASASSKANACTSTSSKANASPGANTTANSNASATSGTATPTDALN. Positions 766, 801, 907, 951, 1000, 1035, and 1040 each coordinate substrate. GTP-binding residues include E1152 and N1271.

It belongs to the IcmF family. Homodimer. Adenosylcob(III)alamin serves as cofactor. Requires Mg(2+) as cofactor.

It carries out the reaction 2-methylpropanoyl-CoA = butanoyl-CoA. The enzyme catalyses GTP + H2O = GDP + phosphate + H(+). Catalyzes the reversible interconversion of isobutyryl-CoA and n-butyryl-CoA, using radical chemistry. Also exhibits GTPase activity, associated with its G-protein domain (MeaI) that functions as a chaperone that assists cofactor delivery and proper holo-enzyme assembly. Does not exhibit methylmalonyl-CoA mutase (MCM) activity. This chain is Fused isobutyryl-CoA mutase, found in Paraburkholderia xenovorans (strain LB400).